A 356-amino-acid chain; its full sequence is Fructose-bisphosphate aldolase 1, chloroplastic (356 aa).

The N-terminal 6 residues, 1-6, are a transit peptide targeting the chloroplast; the sequence is GLTIRA. Positions 53 and 143 each coordinate substrate. Glutamate 183 serves as the catalytic Proton acceptor. Lysine 225 (schiff-base intermediate with dihydroxyacetone-P) is an active-site residue.

The protein belongs to the class I fructose-bisphosphate aldolase family.

The protein localises to the plastid. Its subcellular location is the chloroplast. The catalysed reaction is beta-D-fructose 1,6-bisphosphate = D-glyceraldehyde 3-phosphate + dihydroxyacetone phosphate. The protein operates within carbohydrate degradation; glycolysis; D-glyceraldehyde 3-phosphate and glycerone phosphate from D-glucose: step 4/4. This chain is Fructose-bisphosphate aldolase 1, chloroplastic, found in Pisum sativum (Garden pea).